A 293-amino-acid chain; its full sequence is Formamidopyrimidine-DNA glycosylase (293 aa).

Proline 2 acts as the Schiff-base intermediate with DNA in catalysis. The Proton donor role is filled by glutamate 3. Catalysis depends on lysine 58, which acts as the Proton donor; for beta-elimination activity. DNA is bound by residues histidine 104, arginine 123, and arginine 166. Residues 257-293 (QVYDREGDKCRTPACKGAVKRFTQNGRSTFWCPVCQT) form an FPG-type zinc finger. Arginine 283 (proton donor; for delta-elimination activity) is an active-site residue.

This sequence belongs to the FPG family. In terms of assembly, monomer. Requires Zn(2+) as cofactor.

It catalyses the reaction Hydrolysis of DNA containing ring-opened 7-methylguanine residues, releasing 2,6-diamino-4-hydroxy-5-(N-methyl)formamidopyrimidine.. The enzyme catalyses 2'-deoxyribonucleotide-(2'-deoxyribose 5'-phosphate)-2'-deoxyribonucleotide-DNA = a 3'-end 2'-deoxyribonucleotide-(2,3-dehydro-2,3-deoxyribose 5'-phosphate)-DNA + a 5'-end 5'-phospho-2'-deoxyribonucleoside-DNA + H(+). Its function is as follows. Involved in base excision repair of DNA damaged by oxidation or by mutagenic agents. Acts as a DNA glycosylase that recognizes and removes damaged bases. Has a preference for oxidized purines, such as 7,8-dihydro-8-oxoguanine (8-oxoG). Has AP (apurinic/apyrimidinic) lyase activity and introduces nicks in the DNA strand. Cleaves the DNA backbone by beta-delta elimination to generate a single-strand break at the site of the removed base with both 3'- and 5'-phosphates. The sequence is that of Formamidopyrimidine-DNA glycosylase from Nitrobacter winogradskyi (strain ATCC 25391 / DSM 10237 / CIP 104748 / NCIMB 11846 / Nb-255).